Consider the following 212-residue polypeptide: ATP phosphoribosyltransferase (212 aa).

It belongs to the ATP phosphoribosyltransferase family. Short subfamily. As to quaternary structure, heteromultimer composed of HisG and HisZ subunits.

The protein localises to the cytoplasm. It catalyses the reaction 1-(5-phospho-beta-D-ribosyl)-ATP + diphosphate = 5-phospho-alpha-D-ribose 1-diphosphate + ATP. The protein operates within amino-acid biosynthesis; L-histidine biosynthesis; L-histidine from 5-phospho-alpha-D-ribose 1-diphosphate: step 1/9. Its function is as follows. Catalyzes the condensation of ATP and 5-phosphoribose 1-diphosphate to form N'-(5'-phosphoribosyl)-ATP (PR-ATP). Has a crucial role in the pathway because the rate of histidine biosynthesis seems to be controlled primarily by regulation of HisG enzymatic activity. The protein is ATP phosphoribosyltransferase of Citrifermentans bemidjiense (strain ATCC BAA-1014 / DSM 16622 / JCM 12645 / Bem) (Geobacter bemidjiensis).